Reading from the N-terminus, the 185-residue chain is ATP synthase subunit delta, chloroplastic (185 aa).

The protein belongs to the ATPase delta chain family. F-type ATPases have 2 components, F(1) - the catalytic core - and F(0) - the membrane proton channel. F(1) has five subunits: alpha(3), beta(3), gamma(1), delta(1), epsilon(1). CF(0) has four main subunits: a(1), b(1), b'(1) and c(10-14). The alpha and beta chains form an alternating ring which encloses part of the gamma chain. F(1) is attached to F(0) by a central stalk formed by the gamma and epsilon chains, while a peripheral stalk is formed by the delta, b and b' chains.

The protein resides in the plastid. It localises to the chloroplast thylakoid membrane. Its function is as follows. F(1)F(0) ATP synthase produces ATP from ADP in the presence of a proton or sodium gradient. F-type ATPases consist of two structural domains, F(1) containing the extramembraneous catalytic core and F(0) containing the membrane proton channel, linked together by a central stalk and a peripheral stalk. During catalysis, ATP synthesis in the catalytic domain of F(1) is coupled via a rotary mechanism of the central stalk subunits to proton translocation. In terms of biological role, this protein is part of the stalk that links CF(0) to CF(1). It either transmits conformational changes from CF(0) to CF(1) or is implicated in proton conduction. This chain is ATP synthase subunit delta, chloroplastic, found in Gracilaria tenuistipitata var. liui (Red alga).